A 369-amino-acid chain; its full sequence is Protein-glutamate methylesterase/protein-glutamine glutaminase 1 (369 aa).

Residues K3–D120 enclose the Response regulatory domain. D54 bears the 4-aspartylphosphate mark. Residues R136–S168 show a composition bias toward low complexity. A disordered region spans residues R136–V174. Positions G177 to K369 constitute a CheB-type methylesterase domain. Catalysis depends on residues S189, H216, and D312.

Belongs to the CheB family. Post-translationally, phosphorylated by CheA. Phosphorylation of the N-terminal regulatory domain activates the methylesterase activity.

Its subcellular location is the cytoplasm. The enzyme catalyses [protein]-L-glutamate 5-O-methyl ester + H2O = L-glutamyl-[protein] + methanol + H(+). It catalyses the reaction L-glutaminyl-[protein] + H2O = L-glutamyl-[protein] + NH4(+). Functionally, involved in chemotaxis. Part of a chemotaxis signal transduction system that modulates chemotaxis in response to various stimuli. Catalyzes the demethylation of specific methylglutamate residues introduced into the chemoreceptors (methyl-accepting chemotaxis proteins or MCP) by CheR. Also mediates the irreversible deamidation of specific glutamine residues to glutamic acid. This is Protein-glutamate methylesterase/protein-glutamine glutaminase 1 from Oleidesulfovibrio alaskensis (strain ATCC BAA-1058 / DSM 17464 / G20) (Desulfovibrio alaskensis).